The following is a 605-amino-acid chain: Capsid scaffolding protein (605 aa).

Active-site charge relay system residues include H52, S120, and H139. The interval 326–344 (GEFVLIPTAYYSQLLTGQT) is interaction with pAP. The interval 585 to 605 (IQGSTADDADMFANQMMVGRC) is interaction with major capsid protein.

It belongs to the herpesviridae capsid scaffolding protein family. As to quaternary structure, homomultimer. Interacts with major capsid protein. Exists in a monomer-dimer equilibrium with the dimer being the active species. In terms of processing, capsid scaffolding protein is cleaved by assemblin after formation of the spherical procapsid. As a result, the capsid obtains its mature, icosahedral shape. Cleavages occur at two or more sites: release (R-site) and maturation (M-site).

The protein localises to the host cytoplasm. It localises to the host nucleus. The enzyme catalyses Cleaves -Ala-|-Ser- and -Ala-|-Ala- bonds in the scaffold protein.. Functionally, acts as a scaffold protein by binding major capsid protein in the cytoplasm, inducing the nuclear localization of both proteins. Multimerizes in the nucleus such as major capsid protein forms the icosahedral T=16 capsid. Autocatalytic cleavage releases the assembly protein, and subsequently abolishes interaction with major capsid protein. Cleavages products are evicted from the capsid before or during DNA packaging. Protease that plays an essential role in virion assembly within the nucleus. Catalyzes the cleavage of the assembly protein after formation of the spherical procapsid. By that cleavage, the capsid matures and gains its icosahedral shape. The cleavage sites seem to include -Ala-Ser-, -Ala-Ala-, as well as Ala-Thr bonds. Assemblin and cleavages products are evicted from the capsid before or during DNA packaging. Its function is as follows. Plays a major role in capsid assembly. Acts as a scaffold protein by binding major capsid protein. Multimerizes in the nucleus such as major capsid protein forms the icosahedral T=16 capsid. Cleaved by assemblin after capsid completion. The cleavages products are evicted from the capsid before or during DNA packaging. In Varicella-zoster virus (strain Dumas) (HHV-3), this protein is Capsid scaffolding protein (33).